The following is a 627-amino-acid chain: Lipid-A-disaccharide synthase (627 aa).

The tract at residues Met-1–Phe-224 is unknown. The lipid-A-disaccharide synthase stretch occupies residues His-225–Phe-627.

The protein in the C-terminal section; belongs to the LpxB family.

It catalyses the reaction a lipid X + a UDP-2-N,3-O-bis[(3R)-3-hydroxyacyl]-alpha-D-glucosamine = a lipid A disaccharide + UDP + H(+). It functions in the pathway bacterial outer membrane biogenesis; LPS lipid A biosynthesis. Functionally, condensation of UDP-2,3-diacylglucosamine and 2,3-diacylglucosamine-1-phosphate to form lipid A disaccharide, a precursor of lipid A, a phosphorylated glycolipid that anchors the lipopolysaccharide to the outer membrane of the cell. The protein is Lipid-A-disaccharide synthase (lpxB) of Chlamydia abortus (strain DSM 27085 / S26/3) (Chlamydophila abortus).